A 407-amino-acid polypeptide reads, in one-letter code: Substance-P receptor (407 aa).

Over 1–31 the chain is Extracellular; sequence MDNVLPGDSDLFPNISTNSSESNQFVQPAWQ. N-linked (GlcNAc...) asparagine glycosylation is found at asparagine 14 and asparagine 18. The chain crosses the membrane as a helical span at residues 32–54; that stretch reads IVLWAAAYTVIVVTSVVGNVVVM. Topologically, residues 55–64 are cytoplasmic; that stretch reads WIILAHKRMR. Residues 65-86 traverse the membrane as a helical segment; it reads TVTNYFLVNLAFAEASMAAFNT. At 87–106 the chain is on the extracellular side; sequence VVNFTYAVHNEWYYGLFYCK. An N-linked (GlcNAc...) asparagine glycan is attached at asparagine 89. Cysteines 105 and 180 form a disulfide. The helical transmembrane segment at 107–128 threads the bilayer; that stretch reads FHNFFPIAAVFASIYSMTAVAF. The Cytoplasmic segment spans residues 129 to 148; sequence DRYMAIIHPLQPRLSATATK. A helical transmembrane segment spans residues 149–169; that stretch reads VVIFVIWVLALLLAFPQGYYS. Topologically, residues 170–194 are extracellular; sequence TTETMPGRVVCMIEWPEHPNRTYEK. Asparagine 189 carries N-linked (GlcNAc...) asparagine glycosylation. Residues 195–219 traverse the membrane as a helical segment; sequence AYHICVTVLIYFLPLLVIGYAYTVV. Residues 220–248 are Cytoplasmic-facing; it reads GITLWASEIPGDSSDRYHEQVSAKRKVVK. A helical transmembrane segment spans residues 249–270; it reads MMIVVVCTFAICWLPFHVFFLL. At 271–283 the chain is on the extracellular side; sequence PYINPDLYVKKFI. The helical transmembrane segment at 284–308 threads the bilayer; the sequence is QQVYLAIMWLAMSSTMYNPIIYCCL. Topologically, residues 309-407 are cytoplasmic; the sequence is NDRFRLGFKH…SSSFYSNMLA (99 aa). A lipid anchor (S-palmitoyl cysteine) is attached at cysteine 322. Residues 365-407 form a disordered region; sequence HEDEAEEGPKATPSSLDLTSNGSSRSNSKTMTESSSFYSNMLA. A compositionally biased stretch (polar residues) spans 376–407; it reads TPSSLDLTSNGSSRSNSKTMTESSSFYSNMLA.

This sequence belongs to the G-protein coupled receptor 1 family. As to quaternary structure, interacts with ARRB1.

It localises to the cell membrane. This is a receptor for the tachykinin neuropeptide substance P. It is probably associated with G proteins that activate a phosphatidylinositol-calcium second messenger system. This is Substance-P receptor (TACR1) from Meriones unguiculatus (Mongolian jird).